The sequence spans 95 residues: Bombyxin F-1 (95 aa).

The N-terminal stretch at 1–19 (MKLVVIVLLVISVSILVSA) is a signal peptide. Disulfide bonds link cysteine 29/cysteine 82, cysteine 41/cysteine 95, and cysteine 81/cysteine 86. The propeptide at 53-71 (NSDMVYEDSGMPELLPADT) is c peptide like.

It belongs to the insulin family. Heterodimer of a B chain and an A chain linked by two disulfide bonds.

It localises to the secreted. The polypeptide is Bombyxin F-1 (BBXF1) (Bombyx mori (Silk moth)).